A 66-amino-acid polypeptide reads, in one-letter code: Large ribosomal subunit protein bL32 (66 aa).

This sequence belongs to the bacterial ribosomal protein bL32 family.

The chain is Large ribosomal subunit protein bL32 from Rickettsia conorii (strain ATCC VR-613 / Malish 7).